The chain runs to 410 residues: 3-phosphoshikimate 1-carboxyvinyltransferase (410 aa).

3-phosphoshikimate is bound by residues Lys-21, Ser-22, and Arg-26. Lys-21 serves as a coordination point for phosphoenolpyruvate. Residues Gly-69 and Arg-97 each contribute to the phosphoenolpyruvate site. Ser-143, Ser-144, Gln-145, Ser-171, Asp-288, and Lys-315 together coordinate 3-phosphoshikimate. Gln-145 is a binding site for phosphoenolpyruvate. Catalysis depends on Asp-288, which acts as the Proton acceptor. Arg-319, Arg-364, and Lys-389 together coordinate phosphoenolpyruvate.

This sequence belongs to the EPSP synthase family. Monomer.

It localises to the cytoplasm. The catalysed reaction is 3-phosphoshikimate + phosphoenolpyruvate = 5-O-(1-carboxyvinyl)-3-phosphoshikimate + phosphate. It functions in the pathway metabolic intermediate biosynthesis; chorismate biosynthesis; chorismate from D-erythrose 4-phosphate and phosphoenolpyruvate: step 6/7. In terms of biological role, catalyzes the transfer of the enolpyruvyl moiety of phosphoenolpyruvate (PEP) to the 5-hydroxyl of shikimate-3-phosphate (S3P) to produce enolpyruvyl shikimate-3-phosphate and inorganic phosphate. This chain is 3-phosphoshikimate 1-carboxyvinyltransferase, found in Bacteroides fragilis (strain YCH46).